The primary structure comprises 233 residues: MPASPAAQLPAASLLQLIWLASPALPVGGFSYSEGLETAVERAGVTTEVLAGDWLRDQLHLSLARGDLAVIAQAIPAWRVGDVQRIRELNDWVLQTRETSEMRAQAEQMGRSLLDWLRNHDGANAQHITACAQMQPTYPVAFALAASQTAAGVRDCLLAYAFGWAENAMQAALKSVPLGQSAGQRMLARLASDIPTAVEAAISLPDDERQAFSPMLAILSSQHETQYSRLFRS.

Belongs to the UreF family. In terms of assembly, ureD, UreF and UreG form a complex that acts as a GTP-hydrolysis-dependent molecular chaperone, activating the urease apoprotein by helping to assemble the nickel containing metallocenter of UreC. The UreE protein probably delivers the nickel.

The protein localises to the cytoplasm. Its function is as follows. Required for maturation of urease via the functional incorporation of the urease nickel metallocenter. The polypeptide is Urease accessory protein UreF (Polaromonas sp. (strain JS666 / ATCC BAA-500)).